A 228-amino-acid chain; its full sequence is MSKSHLLKYLLISPNLPVGGFCYSEGMESYLHNKNLIDSNSVKDLIINELKIGQIRLDARLLLDFFDIFDEINEGKNLKGNLHKLMSLDKWILSSKDTLEIREQQIQMAKSLFDLTKEFGFEYLCKNNKKSSWPLAWSWACYCFKITKLEMIENFFYSWSANQLSAALRIIPIGATKAQLIQRDLLAIISKVSKEIMDKEIDDIYFGNVGLAMAQQNHNDLYTKLFRN.

This sequence belongs to the UreF family. In terms of assembly, ureD, UreF and UreG form a complex that acts as a GTP-hydrolysis-dependent molecular chaperone, activating the urease apoprotein by helping to assemble the nickel containing metallocenter of UreC. The UreE protein probably delivers the nickel.

It localises to the cytoplasm. Functionally, required for maturation of urease via the functional incorporation of the urease nickel metallocenter. This chain is Urease accessory protein UreF, found in Prochlorococcus marinus (strain AS9601).